The chain runs to 190 residues: Cancer-related nucleoside-triphosphatase homolog (190 aa).

The residue at position 2 (Ala-2) is an N-acetylalanine. Residues 9–16 (GPPGVGKT) and 109–116 (ICVIDEVG) contribute to the ATP site. At Lys-165 the chain carries N6-acetyllysine.

Belongs to the THEP1 NTPase family. As to quaternary structure, monomer.

It catalyses the reaction a ribonucleoside 5'-triphosphate + H2O = a ribonucleoside 5'-diphosphate + phosphate + H(+). The catalysed reaction is 5-methyl-UTP + H2O = 5-methyl-UDP + phosphate + H(+). The enzyme catalyses CTP + H2O = CDP + phosphate + H(+). It carries out the reaction ATP + H2O = ADP + phosphate + H(+). It catalyses the reaction GTP + H2O = GDP + phosphate + H(+). Its function is as follows. Has nucleotide phosphatase activity towards ATP, GTP, CTP, TTP and UTP. Hydrolyzes nucleoside diphosphates with lower efficiency. The sequence is that of Cancer-related nucleoside-triphosphatase homolog (NTPCR) from Bos taurus (Bovine).